Here is a 364-residue protein sequence, read N- to C-terminus: S-adenosylmethionine:tRNA ribosyltransferase-isomerase (364 aa).

This sequence belongs to the QueA family. In terms of assembly, monomer.

The protein localises to the cytoplasm. It carries out the reaction 7-aminomethyl-7-carbaguanosine(34) in tRNA + S-adenosyl-L-methionine = epoxyqueuosine(34) in tRNA + adenine + L-methionine + 2 H(+). Its pathway is tRNA modification; tRNA-queuosine biosynthesis. Its function is as follows. Transfers and isomerizes the ribose moiety from AdoMet to the 7-aminomethyl group of 7-deazaguanine (preQ1-tRNA) to give epoxyqueuosine (oQ-tRNA). The chain is S-adenosylmethionine:tRNA ribosyltransferase-isomerase from Bradyrhizobium sp. (strain ORS 278).